The following is a 184-amino-acid chain: ADP-ribosylation factor-like protein 2 (184 aa).

Residue G2 is the site of N-myristoyl glycine attachment. GTP is bound by residues 23-30 (GLDNAGKT), 66-70 (DIGGQ), and 125-128 (NKQD).

The protein belongs to the small GTPase superfamily. Arf family.

Its function is as follows. May be involved in trafficking events within the endosomal system. The protein is ADP-ribosylation factor-like protein 2 (arl2) of Dictyostelium discoideum (Social amoeba).